Reading from the N-terminus, the 321-residue chain is Beta-ketoacyl-[acyl-carrier-protein] synthase III (321 aa).

Active-site residues include C115 and H248. Residues 249-253 form an ACP-binding region; the sequence is QANIR. N278 is an active-site residue.

The protein belongs to the thiolase-like superfamily. FabH family. In terms of assembly, homodimer.

Its subcellular location is the cytoplasm. It catalyses the reaction malonyl-[ACP] + acetyl-CoA + H(+) = 3-oxobutanoyl-[ACP] + CO2 + CoA. The protein operates within lipid metabolism; fatty acid biosynthesis. Catalyzes the condensation reaction of fatty acid synthesis by the addition to an acyl acceptor of two carbons from malonyl-ACP. Catalyzes the first condensation reaction which initiates fatty acid synthesis and may therefore play a role in governing the total rate of fatty acid production. Possesses both acetoacetyl-ACP synthase and acetyl transacylase activities. Its substrate specificity determines the biosynthesis of branched-chain and/or straight-chain of fatty acids. In Aromatoleum aromaticum (strain DSM 19018 / LMG 30748 / EbN1) (Azoarcus sp. (strain EbN1)), this protein is Beta-ketoacyl-[acyl-carrier-protein] synthase III.